The primary structure comprises 124 residues: Large-conductance mechanosensitive channel (124 aa).

2 helical membrane-spanning segments follow: residues 15 to 35 and 67 to 87; these read MDLAVGVIIGAAFTAIVNSLV and GSFLNAVINFLIIALVVFFLI.

The protein belongs to the MscL family. As to quaternary structure, homopentamer.

It localises to the cell membrane. Functionally, channel that opens in response to stretch forces in the membrane lipid bilayer. May participate in the regulation of osmotic pressure changes within the cell. The protein is Large-conductance mechanosensitive channel of Lactobacillus johnsonii (strain CNCM I-12250 / La1 / NCC 533).